Consider the following 27-residue polypeptide: Delta-conotoxin TxVIB (27 aa).

3 cysteine pairs are disulfide-bonded: Cys-2-Cys-17, Cys-9-Cys-21, and Cys-16-Cys-26.

Belongs to the conotoxin O1 superfamily. As to expression, expressed by the venom duct.

The protein resides in the secreted. Its function is as follows. Delta-conotoxins bind to site 6 of voltage-gated sodium channels (Nav) and inhibit the inactivation process. Induces membrane depolarization and spontaneous repetitive firing of neurons. The sequence is that of Delta-conotoxin TxVIB from Conus textile (Cloth-of-gold cone).